The primary structure comprises 377 residues: Alanine racemase (377 aa).

Catalysis depends on K37, which acts as the Proton acceptor; specific for D-alanine. Residue K37 is modified to N6-(pyridoxal phosphate)lysine. Position 135 (R135) interacts with substrate. Catalysis depends on Y271, which acts as the Proton acceptor; specific for L-alanine. M319 is a substrate binding site.

Belongs to the alanine racemase family. Pyridoxal 5'-phosphate is required as a cofactor.

The catalysed reaction is L-alanine = D-alanine. The protein operates within amino-acid biosynthesis; D-alanine biosynthesis; D-alanine from L-alanine: step 1/1. Functionally, catalyzes the interconversion of L-alanine and D-alanine. May also act on other amino acids. This chain is Alanine racemase (alr), found in Helicobacter pylori (strain P12).